The sequence spans 71 residues: uncharacterized protein (71 aa).

This is an uncharacterized protein from Haemophilus influenzae (strain ATCC 51907 / DSM 11121 / KW20 / Rd).